The chain runs to 395 residues: G-protein coupled receptor 182 (395 aa).

At 1-53 (MSVIPSSRPVSTLAPDNDFREIHNWTELLHLFNQTFSDCHMELNENTKQVVLF) the chain is on the extracellular side. Asn24 and Asn33 each carry an N-linked (GlcNAc...) asparagine glycan. A helical membrane pass occupies residues 54–75 (VFYLAIFVVGLVENVLVICVNC). Over 76 to 86 (RRSGRVGMLNL) the chain is Cytoplasmic. A helical transmembrane segment spans residues 87-109 (YILNMAVADLGIILSLPVWMLEV). At 110–123 (MLEYTWLWGSFSCR) the chain is on the extracellular side. Residues Cys122 and Cys198 are joined by a disulfide bond. The helical transmembrane segment at 124 to 145 (FIHYFYLANMYSSIFFLTCLSI) threads the bilayer. Over 146 to 166 (DRYVTLTNTSPSWQRHQHRIR) the chain is Cytoplasmic. The helical transmembrane segment at 167–189 (RAVCAGVWVLSAIIPLPEVVHIQ) threads the bilayer. The Extracellular segment spans residues 190–213 (LLDGSEPMCLFLAPFETYSAWALA). A helical transmembrane segment spans residues 214–235 (VALSATILGFLLPFPLIAVFNI). Topologically, residues 236–254 (LSACRLRRQGQTESRRHCL) are cytoplasmic. Residues 255-276 (LMWAYIVVFVICWLPYHVTMLL) form a helical membrane-spanning segment. Over 277-295 (LTLHTTHIFLHCNLVNFLY) the chain is Extracellular. The chain crosses the membrane as a helical span at residues 296 to 316 (FFYEIIDCFSMLHCVANPILY). Residues 317–395 (NFLSPSFRGR…RTPHLHSAIP (79 aa)) are Cytoplasmic-facing. At Ser329 the chain carries Phosphoserine.

This sequence belongs to the G-protein coupled receptor 1 family. Expressed in a wide variety of peripheral tissues in the adult rat with prominent expression in lung, testis, adrenal and liver.

It is found in the cell membrane. Its function is as follows. Orphan receptor. This is G-protein coupled receptor 182 (Gpr182) from Rattus norvegicus (Rat).